The following is a 34-amino-acid chain: Turripeptide OL127 (34 aa).

In terms of processing, contains 4 disulfide bonds. As to expression, expressed by the venom duct.

Its subcellular location is the secreted. Acts as a neurotoxin by inhibiting an ion channel. The protein is Turripeptide OL127 of Iotyrris olangoensis (Sea snail).